The following is a 351-amino-acid chain: Thiamine-phosphate synthase (351 aa).

The segment at 1-128 (MLNSNTKDHE…SKIASEIRYE (128 aa)) is unknown. Residues 129 to 351 (IYTVEIDLLS…MILKELSHEN (223 aa)) form a thiamine-phosphate synthase region. Residues 180–184 (QHRFK) and N212 each bind 4-amino-2-methyl-5-(diphosphooxymethyl)pyrimidine. Mg(2+) is bound by residues D213 and D232. A 4-amino-2-methyl-5-(diphosphooxymethyl)pyrimidine-binding site is contributed by S251. Residue 277 to 279 (TTT) coordinates 2-[(2R,5Z)-2-carboxy-4-methylthiazol-5(2H)-ylidene]ethyl phosphate. K280 contributes to the 4-amino-2-methyl-5-(diphosphooxymethyl)pyrimidine binding site. G307 is a binding site for 2-[(2R,5Z)-2-carboxy-4-methylthiazol-5(2H)-ylidene]ethyl phosphate.

It belongs to the thiamine-phosphate synthase family. Requires Mg(2+) as cofactor.

The catalysed reaction is 2-[(2R,5Z)-2-carboxy-4-methylthiazol-5(2H)-ylidene]ethyl phosphate + 4-amino-2-methyl-5-(diphosphooxymethyl)pyrimidine + 2 H(+) = thiamine phosphate + CO2 + diphosphate. It catalyses the reaction 2-(2-carboxy-4-methylthiazol-5-yl)ethyl phosphate + 4-amino-2-methyl-5-(diphosphooxymethyl)pyrimidine + 2 H(+) = thiamine phosphate + CO2 + diphosphate. It carries out the reaction 4-methyl-5-(2-phosphooxyethyl)-thiazole + 4-amino-2-methyl-5-(diphosphooxymethyl)pyrimidine + H(+) = thiamine phosphate + diphosphate. Its pathway is cofactor biosynthesis; thiamine diphosphate biosynthesis; thiamine phosphate from 4-amino-2-methyl-5-diphosphomethylpyrimidine and 4-methyl-5-(2-phosphoethyl)-thiazole: step 1/1. Condenses 4-methyl-5-(beta-hydroxyethyl)thiazole monophosphate (THZ-P) and 2-methyl-4-amino-5-hydroxymethyl pyrimidine pyrophosphate (HMP-PP) to form thiamine monophosphate (TMP). This Prochlorococcus marinus (strain AS9601) protein is Thiamine-phosphate synthase.